The chain runs to 231 residues: 4-hydroxy-tetrahydrodipicolinate reductase (231 aa).

NAD(+) is bound by residues Asp-33, 68-70, and 92-95; these read CTT and SSNT. Residue His-124 is the Proton donor/acceptor of the active site. Residue His-125 coordinates (S)-2,3,4,5-tetrahydrodipicolinate. Residue Lys-128 is the Proton donor of the active site. 134-135 contributes to the (S)-2,3,4,5-tetrahydrodipicolinate binding site; it reads GT.

Belongs to the DapB family.

It localises to the cytoplasm. It carries out the reaction (S)-2,3,4,5-tetrahydrodipicolinate + NAD(+) + H2O = (2S,4S)-4-hydroxy-2,3,4,5-tetrahydrodipicolinate + NADH + H(+). The enzyme catalyses (S)-2,3,4,5-tetrahydrodipicolinate + NADP(+) + H2O = (2S,4S)-4-hydroxy-2,3,4,5-tetrahydrodipicolinate + NADPH + H(+). It participates in amino-acid biosynthesis; L-lysine biosynthesis via DAP pathway; (S)-tetrahydrodipicolinate from L-aspartate: step 4/4. Its function is as follows. Catalyzes the conversion of 4-hydroxy-tetrahydrodipicolinate (HTPA) to tetrahydrodipicolinate. The polypeptide is 4-hydroxy-tetrahydrodipicolinate reductase (Brachyspira hyodysenteriae (strain ATCC 49526 / WA1)).